Reading from the N-terminus, the 145-residue chain is Large ribosomal subunit protein uL11 (145 aa).

This sequence belongs to the universal ribosomal protein uL11 family. As to quaternary structure, part of the ribosomal stalk of the 50S ribosomal subunit. Interacts with L10 and the large rRNA to form the base of the stalk. L10 forms an elongated spine to which L12 dimers bind in a sequential fashion forming a multimeric L10(L12)X complex. One or more lysine residues are methylated.

Forms part of the ribosomal stalk which helps the ribosome interact with GTP-bound translation factors. This Rubrobacter xylanophilus (strain DSM 9941 / JCM 11954 / NBRC 16129 / PRD-1) protein is Large ribosomal subunit protein uL11.